A 141-amino-acid polypeptide reads, in one-letter code: Transcription antitermination protein NusB (141 aa).

The protein belongs to the NusB family.

In terms of biological role, involved in transcription antitermination. Required for transcription of ribosomal RNA (rRNA) genes. Binds specifically to the boxA antiterminator sequence of the ribosomal RNA (rrn) operons. This is Transcription antitermination protein NusB from Neisseria meningitidis serogroup C (strain 053442).